The primary structure comprises 512 residues: Putative ankyrin repeat protein FPV233 (512 aa).

ANK repeat units follow at residues 45-73 (IPFI…NVNQ), 77-106 (DDTY…QCSV), 136-168 (IQDI…DINM), 172-201 (HGNS…NPNI), 205-236 (TNKS…NTDP), 238-262 (LSHA…SINA), 266-296 (YGNT…DVNA), and 301-329 (RNLT…DINS).

This chain is Putative ankyrin repeat protein FPV233, found in Vertebrata (FPV).